Here is a 249-residue protein sequence, read N- to C-terminus: Putative TrmH family tRNA/rRNA methyltransferase (249 aa).

Residues Gly-196, Ile-216, and Leu-225 each coordinate S-adenosyl-L-methionine.

The protein belongs to the class IV-like SAM-binding methyltransferase superfamily. RNA methyltransferase TrmH family.

The chain is Putative TrmH family tRNA/rRNA methyltransferase from Staphylococcus saprophyticus subsp. saprophyticus (strain ATCC 15305 / DSM 20229 / NCIMB 8711 / NCTC 7292 / S-41).